The sequence spans 307 residues: Glutathione synthetase (307 aa).

The 185-residue stretch at 120–304 folds into the ATP-grasp domain; it reads KLGALRYSHL…VSDKVIEKLL (185 aa). 146–202 contributes to the ATP binding site; the sequence is AQINHDVVVKPLGGKGGQGVIRLTKDSPGIKAMIELITSQEQLPVMMQKFIPEVKEG. The Mg(2+) site is built by E275 and N277.

It belongs to the prokaryotic GSH synthase family. Requires Mg(2+) as cofactor. Mn(2+) is required as a cofactor.

The catalysed reaction is gamma-L-glutamyl-L-cysteine + glycine + ATP = glutathione + ADP + phosphate + H(+). It participates in sulfur metabolism; glutathione biosynthesis; glutathione from L-cysteine and L-glutamate: step 2/2. In Prochlorococcus marinus subsp. pastoris (strain CCMP1986 / NIES-2087 / MED4), this protein is Glutathione synthetase.